A 316-amino-acid chain; its full sequence is Serpentine receptor class delta-48 (316 aa).

7 helical membrane-spanning segments follow: residues 8–28 (FFYITFFILVLPTQIFGIFVI), 42–62 (FLLCNLICQIISVATLCLLQL), 89–109 (LFYVLSQISTLMTYFLVFITI), 127–147 (VVIILMLLLPIFITMVAQIDL), 185–205 (FLLTVIIFGSVFLLPPAGFFI), 236–256 (TLQSFLPLVCICPIFACYFVV), and 269–289 (ILPVLVMLPTLFDPYIILYSV).

This sequence belongs to the nematode receptor-like protein srd family.

Its subcellular location is the membrane. This chain is Serpentine receptor class delta-48 (srd-48), found in Caenorhabditis elegans.